The chain runs to 800 residues: Protein gfi-3 (800 aa).

Residues 346-366 (ESLQQAQLRNDEICHQMANIE) adopt a coiled-coil conformation. TPR repeat units follow at residues 526 to 559 (AIGA…YPEE) and 637 to 670 (IRIH…AENT).

The APC/C complex is probably composed of at least 12 subunits: apc-2, apc-10, apc-11, cdc-26, emb-1, emb-27, emb-30, mat-1, mat-2, mat-3, such-1 and gfi-3. In terms of tissue distribution, expressed in gut cells and mature sperm stored in the spermatheca.

It participates in protein modification; protein ubiquitination. Functionally, probable component of the anaphase promoting complex/cyclosome (APC/C), a cell cycle-regulated E3 ubiquitin ligase that controls progression through mitosis and the G1 phase of the cell cycle. The APC/C complex acts by mediating ubiquitination and subsequent degradation of target proteins. Required for the metaphase to anaphase transition in meiosis. The protein is Protein gfi-3 of Caenorhabditis elegans.